Here is a 349-residue protein sequence, read N- to C-terminus: Autophagy-related protein 3 (349 aa).

The interval 95-173 is flexible region; that stretch reads ALVNDGDDFK…IRDSGADSKN (79 aa). C244 serves as the catalytic Glycyl thioester intermediate. Residues 248 to 325 are handle region; it reads SVMKTLLDRA…DQEVAIRVDQ (78 aa). The short motif at 306-309 is the ATG8 interaction motif (AIM) element; sequence WEEV.

It belongs to the ATG3 family. As to quaternary structure, monomer. Interacts with ATG8 through an intermediate thioester bond between Cys-244 and the C-terminal Gly of ATG8. Interacts with the C-terminal region of the E1-like ATG7 enzyme. Also interacts with the ATG12-ATG5 conjugate.

It is found in the cytoplasm. E2 conjugating enzyme required for the cytoplasm to vacuole transport (Cvt) and autophagy. Required for selective autophagic degradation of the nucleus (nucleophagy) as well as for mitophagy which contributes to regulate mitochondrial quantity and quality by eliminating the mitochondria to a basal level to fulfill cellular energy requirements and preventing excess ROS production. Responsible for the E2-like covalent binding of phosphatidylethanolamine to the C-terminal Gly of ATG8. The ATG12-ATG5 conjugate plays a role of an E3 and promotes the transfer of ATG8 from ATG3 to phosphatidylethanolamine (PE). This step is required for the membrane association of ATG8. The formation of the ATG8-phosphatidylethanolamine conjugate is essential for autophagy and for the cytoplasm to vacuole transport (Cvt). The ATG8-PE conjugate mediates tethering between adjacent membranes and stimulates membrane hemifusion, leading to expansion of the autophagosomal membrane during autophagy. Autophagy is required for proper vegetative growth, asexual/sexual reproduction, and full virulence. Autophagy is particularly involved in the biosynthesis of deoxynivalenol (DON), an important virulence determinant. In Gibberella zeae (strain ATCC MYA-4620 / CBS 123657 / FGSC 9075 / NRRL 31084 / PH-1) (Wheat head blight fungus), this protein is Autophagy-related protein 3.